Here is a 376-residue protein sequence, read N- to C-terminus: Cytoplasmic tRNA 2-thiolation protein 2 (376 aa).

This sequence belongs to the CTU2/NCS2 family.

It is found in the cytoplasm. Its pathway is tRNA modification; 5-methoxycarbonylmethyl-2-thiouridine-tRNA biosynthesis. Its function is as follows. Plays a central role in 2-thiolation of mcm(5)S(2)U at tRNA wobble positions of tRNA(Lys), tRNA(Glu) and tRNA(Gln). May act by forming a heterodimer with NCS6 that ligates sulfur from thiocarboxylated URM1 onto the uridine of tRNAs at wobble position. Prior mcm(5) tRNA modification by the elongator complex is required for 2-thiolation. May also be involved in protein urmylation. The chain is Cytoplasmic tRNA 2-thiolation protein 2 from Coccidioides immitis (strain RS) (Valley fever fungus).